We begin with the raw amino-acid sequence, 452 residues long: MRFYNTLTRDVDEFKEMNSGRINMFVCGPTVQDHFHIGHARTYIFFDAVAKLLRNLGYSVFYLQNITDIDDKIINKAREMNIQPQDVADMYLREFLEDMSALKVTSVNYFAKSTLYINEIISQISRLIEKGYAYETSDGVYFEVSKFADYGQLSNQSLDQIIHGYRVAVNENKRNPEDFVLWKKRKPGEPYWDSPWGPGRPGWHIEDTAITETYFGPEYDIHGGGSDLIFPHHEAEIAQMRAISGRKYLSHYWIHTGMINVNNEKMSKSLKNFVTIREVLKEYRPEDLRYALLNANYRTQLDFSKGLLEESRKQVEYLNSTFRKLVNASGNSDLSADPSAVIKRMVDEATNDFDFRSVFRDLIDFAGDLNKNIESISRPAAQKAIDVFRWVDSFAGILLPETARLSGIIDDLLDLRKNLRTERKFQEADRIRDLLLKNGIHVEDRGDETIWW.

Residue Cys27 coordinates Zn(2+). The short motif at 29–39 (PTVQDHFHIGH) is the 'HIGH' region element. Zn(2+)-binding residues include Asp207, His232, and Glu236. The 'KMSKS' region signature appears at 265 to 269 (KMSKS). Lys268 is an ATP binding site.

The protein belongs to the class-I aminoacyl-tRNA synthetase family. Requires Zn(2+) as cofactor.

Its subcellular location is the cytoplasm. It catalyses the reaction tRNA(Cys) + L-cysteine + ATP = L-cysteinyl-tRNA(Cys) + AMP + diphosphate. The protein is Cysteine--tRNA ligase of Thermoplasma acidophilum (strain ATCC 25905 / DSM 1728 / JCM 9062 / NBRC 15155 / AMRC-C165).